A 549-amino-acid chain; its full sequence is Glutamyl-tRNA(Gln) amidotransferase subunit B, chloroplastic/mitochondrial (549 aa).

The protein belongs to the GatB/GatE family. GatB subfamily. Subunit of the heterotrimeric GatCAB amidotransferase (AdT) complex, composed of A, B and C subunits.

The protein localises to the mitochondrion. The protein resides in the plastid. It localises to the chloroplast. It catalyses the reaction L-glutamyl-tRNA(Gln) + L-glutamine + ATP + H2O = L-glutaminyl-tRNA(Gln) + L-glutamate + ADP + phosphate + H(+). Allows the formation of correctly charged Gln-tRNA(Gln) through the transamidation of misacylated Glu-tRNA(Gln) in chloroplasts and mitochondria. The reaction takes place in the presence of glutamine and ATP through an activated gamma-phospho-Glu-tRNA(Gln). The polypeptide is Glutamyl-tRNA(Gln) amidotransferase subunit B, chloroplastic/mitochondrial (Ricinus communis (Castor bean)).